A 101-amino-acid polypeptide reads, in one-letter code: Small ribosomal subunit protein uS14 (101 aa).

Belongs to the universal ribosomal protein uS14 family. In terms of assembly, part of the 30S ribosomal subunit. Contacts proteins S3 and S10.

Functionally, binds 16S rRNA, required for the assembly of 30S particles and may also be responsible for determining the conformation of the 16S rRNA at the A site. The chain is Small ribosomal subunit protein uS14 from Methylorubrum extorquens (strain PA1) (Methylobacterium extorquens).